Consider the following 96-residue polypeptide: uncharacterized protein (96 aa).

Residues cysteine 10, cysteine 16, and cysteine 55 each contribute to the [3Fe-4S] cluster site. The tract at residues 67-96 (AGDGERASADPAPSPAEAERHAAKDQHNLG) is disordered. The span at 83–96 (EAERHAAKDQHNLG) shows a compositional bias: basic and acidic residues.

Requires [3Fe-4S] cluster as cofactor.

In terms of biological role, electron transport protein for the cytochrome systems. This is an uncharacterized protein from Bradyrhizobium diazoefficiens (strain JCM 10833 / BCRC 13528 / IAM 13628 / NBRC 14792 / USDA 110).